Consider the following 349-residue polypeptide: tRNA pseudouridine synthase D (349 aa).

Phe27 is a substrate binding site. Asp80 (nucleophile) is an active-site residue. Asn129 provides a ligand contact to substrate. Residues 155–303 enclose the TRUD domain; that stretch reads GVPNYFGAQR…VEAARRAMLL (149 aa). Residue Phe329 coordinates substrate.

The protein belongs to the pseudouridine synthase TruD family.

The enzyme catalyses uridine(13) in tRNA = pseudouridine(13) in tRNA. In terms of biological role, responsible for synthesis of pseudouridine from uracil-13 in transfer RNAs. The protein is tRNA pseudouridine synthase D of Escherichia coli (strain 55989 / EAEC).